A 151-amino-acid polypeptide reads, in one-letter code: Flagellar assembly factor FliW 2 (151 aa).

It belongs to the FliW family. Interacts with translational regulator CsrA and flagellin(s).

The protein localises to the cytoplasm. Acts as an anti-CsrA protein, binds CsrA and prevents it from repressing translation of its target genes, one of which is flagellin. Binds to flagellin and participates in the assembly of the flagellum. This is Flagellar assembly factor FliW 2 from Desulfotalea psychrophila (strain LSv54 / DSM 12343).